A 247-amino-acid chain; its full sequence is Trypsin-4 (247 aa).

Residues 1 to 15 (MKISIFFAFLGAAVA) form the signal peptide. A propeptide spans 16 to 23 (LPVNDDDK) (activation peptide). The Peptidase S1 domain maps to 24-245 (IVGGYTCPKH…YLSWIQETMA (222 aa)). 6 disulfide bridges follow: Cys-30–Cys-161, Cys-49–Cys-65, Cys-133–Cys-234, Cys-140–Cys-207, Cys-172–Cys-186, and Cys-197–Cys-221. Residue His-64 is the Charge relay system of the active site. Glu-76, Asn-78, Val-81, and Glu-86 together coordinate Ca(2+). Asp-108 functions as the Charge relay system in the catalytic mechanism. Ser-201 functions as the Charge relay system in the catalytic mechanism.

This sequence belongs to the peptidase S1 family. Requires Ca(2+) as cofactor. Post-translationally, proteolytically cleaved and activated by an autocatalytic mechanism. Cleavage by CTRC inhibits autoactivation.

The protein resides in the secreted. The protein localises to the extracellular space. It carries out the reaction Preferential cleavage: Arg-|-Xaa, Lys-|-Xaa.. Activated by autocatalytic cleavage. Cleavage by CTRC inhibits autoactivation. Serine protease capable of autoactivation. The polypeptide is Trypsin-4 (Rattus norvegicus (Rat)).